Reading from the N-terminus, the 188-residue chain is Elongation factor P (188 aa).

It belongs to the elongation factor P family.

It is found in the cytoplasm. The protein operates within protein biosynthesis; polypeptide chain elongation. Its function is as follows. Involved in peptide bond synthesis. Stimulates efficient translation and peptide-bond synthesis on native or reconstituted 70S ribosomes in vitro. Probably functions indirectly by altering the affinity of the ribosome for aminoacyl-tRNA, thus increasing their reactivity as acceptors for peptidyl transferase. In Chlorobium phaeobacteroides (strain DSM 266 / SMG 266 / 2430), this protein is Elongation factor P.